Reading from the N-terminus, the 388-residue chain is tRNA (guanine(26)-N(2))-dimethyltransferase (388 aa).

Residues 4–383 enclose the Trm1 methyltransferase domain; it reads RTIVEGTTKI…APIAEIKKII (380 aa). Residues arginine 41, arginine 78, aspartate 94, and alanine 123 each coordinate S-adenosyl-L-methionine. Zn(2+) is bound by residues cysteine 251, cysteine 254, cysteine 271, and cysteine 274.

It belongs to the class I-like SAM-binding methyltransferase superfamily. Trm1 family.

It carries out the reaction guanosine(26) in tRNA + 2 S-adenosyl-L-methionine = N(2)-dimethylguanosine(26) in tRNA + 2 S-adenosyl-L-homocysteine + 2 H(+). Dimethylates a single guanine residue at position 26 of a number of tRNAs using S-adenosyl-L-methionine as donor of the methyl groups. This chain is tRNA (guanine(26)-N(2))-dimethyltransferase, found in Methanosarcina acetivorans (strain ATCC 35395 / DSM 2834 / JCM 12185 / C2A).